A 1475-amino-acid chain; its full sequence is Nuclear pore complex protein Nup153 (1475 aa).

The span at 1-15 (MASGAGGVGGGGGGK) shows a compositional bias: gly residues. Disordered stretches follow at residues 1-37 (MASG…QQHQ), 90-124 (DEES…NYPD), and 171-225 (DSTS…TATS). At A2 the chain carries N-acetylalanine. At T102 the chain carries Phosphothreonine. 2 stretches are compositionally biased toward polar residues: residues 107–121 (VSNT…TASN) and 181–190 (ISTTSGFSSR). 5 positions are modified to phosphoserine: S182, S185, S192, S203, and S209. Residues 236–237 (FG) form repeat 1. The 29 X 2 AA repeats of F-G stretch occupies residues 236-1418 (FGTLSPSLGN…NSPSGVFTFG (1183 aa)). Phosphoserine is present on residues S240, S257, S297, S320, S330, S333, S334, S338, and S343. K353 is covalently cross-linked (Glycyl lysine isopeptide (Lys-Gly) (interchain with G-Cter in SUMO2)). T369 bears the Phosphothreonine mark. The residue at position 384 (K384) is an N6-acetyllysine. T388 carries the phosphothreonine modification. 5 positions are modified to phosphoserine: S500, S516, S518, S522, and S529. Residues S534 and S544 are each glycosylated (O-linked (GlcNAc) serine). Residue T588 is modified to Phosphothreonine. Residues S607, S614, S619, and S633 each carry the phosphoserine modification. Copy 2 of the repeat occupies 652–653 (FG). The RanBP2-type 1 zinc-finger motif lies at 657–687 (KAGSSWQCDTCLLQNKVTDNKCIACQAAKLS). Positions 664, 667, 678, and 681 each coordinate Zn(2+). At S687 the chain carries Phosphoserine. The stretch at 715–716 (FG) is repeat 3. K718 carries the N6-acetyllysine modification. The RanBP2-type 2 zinc-finger motif lies at 722–751 (VIGTWDCDTCLVQNKPEAIKCVACETPKPG). Residues C728, C731, C742, and C745 each contribute to the Zn(2+) site. Repeat 4 spans residues 786–787 (FG). 2 consecutive RanBP2-type zinc fingers follow at residues 793 to 822 (PIGS…EKPG) and 851 to 880 (PEGS…AKPG). Zn(2+) contacts are provided by C799, C802, C813, C816, C857, C860, C871, and C874. Position 891 is a phosphoserine (S891). Repeat 5 spans residues 905-906 (FG). Residues S908 and S909 are each glycosylated (O-linked (GlcNAc) serine). Copy 6 of the repeat occupies 926 to 927 (FG). Residue K954 is modified to N6-acetyllysine. 5 tandem repeats follow at residues 961-962 (FG), 983-984 (FG), 1000-1001 (FG), 1024-1025 (FG), and 1084-1085 (FG). O-linked (GlcNAc) serine glycosylation occurs at S1113. 2 repeat units span residues 1118-1119 (FG) and 1135-1136 (FG). Positions 1128-1167 (KCQPVFSFGNSEQTKDENSSKSTFSFSMTKPSEKESEQPA) are disordered. Low complexity predominate over residues 1147–1157 (SKSTFSFSMTK). A glycan (O-linked (GlcNAc) threonine) is linked at T1156. 11 tandem repeats follow at residues 1173-1174 (FG), 1212-1213 (FG), 1228-1229 (FG), 1240-1241 (FG), 1275-1276 (FG), 1289-1290 (FG), 1291-1292 (FG), 1306-1307 (FG), 1319-1320 (FG), 1327-1328 (FG), and 1341-1342 (FG). Residues 1311–1402 (SAPSASPAFG…SAFQFGSSTT (92 aa)) are disordered. Over residues 1321–1335 (ANQTPTFGQSQGASQ) the composition is skewed to polar residues. Composition is skewed to polar residues over residues 1343-1356 (SISS…TGSQ) and 1363-1396 (GTVS…SAFQ). Residues 1350 to 1475 (LFPTGSQPAP…KIKTAVRRRK (126 aa)) are (Microbial infection) Interacts with HIV-1 capsid protein p24 (CA). Repeat copies occupy residues 1362–1363 (FG), 1374–1375 (FG), 1383–1384 (FG), 1397–1398 (FG), and 1417–1418 (FG). 2 stretches are compositionally biased toward polar residues: residues 1420 to 1431 (NSSTPAASAQPS) and 1438 to 1463 (FNQS…TSFS). The disordered stretch occupies residues 1420-1475 (NSSTPAASAQPSGSGGFPFNQSPAAFTVGSNGKNVFSSSGTSFSGRKIKTAVRRRK). A phosphoserine mark is found at S1457, S1461, and S1463. A compositionally biased stretch (basic residues) spans 1465 to 1475 (RKIKTAVRRRK).

It belongs to the NUP153 family. In terms of assembly, part of the nuclear pore complex (NPC). Interacts with TPR (via coiled coil region); the interaction is direct and provides a link between the core structure and the TPR-containing nuclear basket of the nuclear pore complex (NPC). Interacts with HIKESHI. Interacts with SENP2. Interacts with XPO5. Interacts with RAN; the interaction occurs in a GTP- and GDP-independent manner. Interacts with MCM3AP isoform GANP; this interaction is required for GANP localization at the nuclear pore complex. Interacts with MAPK1. (Microbial infection) Interacts (via C-terminus) with HIV-1 capsid protein p24 (CA) (via N-terminus). As to quaternary structure, (Microbial infection) Interacts with HIV-1 integrase; this interaction might play a role in nuclear import of HIV pre-integration complex. In terms of assembly, (Microbial infection) Interacts with hepatitis B virus capsid protein; this interaction probably plays a role in nuclear import of HBV genome. (Microbial infection) Interacts with Epstein-barr virus BGLF4; this interaction allows BGLF4 nuclear entry. As to quaternary structure, (Microbial infection) Interacts with HIV-2 virus protein vpx; this interaction might promote vpx nuclear entry. Zn(2+) is required as a cofactor. Post-translationally, phosphorylated in interphase, hyperphosphorylated during mitosis. May play a role in the reversible disassembly of the nuclear pore complex during mitosis. In terms of processing, proteolytically degraded after poliovirus (PV) infection; degradation is partial and NCP- and TPR-binding domains withstand degradation. O-glycosylated during cytokinesis at sites identical or close to phosphorylation sites, this interferes with the phosphorylation status.

It is found in the nucleus. Its subcellular location is the nucleus membrane. It localises to the nuclear pore complex. Functionally, component of the nuclear pore complex (NPC), a complex required for the trafficking across the nuclear envelope. Functions as a scaffolding element in the nuclear phase of the NPC essential for normal nucleocytoplasmic transport of proteins and mRNAs. Involved in the quality control and retention of unspliced mRNAs in the nucleus; in association with TPR, regulates the nuclear export of unspliced mRNA species bearing constitutive transport element (CTE) in a NXF1- and KHDRBS1-independent manner. Mediates TPR anchoring to the nuclear membrane at NPC. The repeat-containing domain may be involved in anchoring other components of the NPC to the pore membrane. Possible DNA-binding subunit of the nuclear pore complex (NPC). In terms of biological role, (Microbial infection) Interacts with HIV-1 caspid protein P24 and thereby promotes the integration of the virus in the nucleus of non-dividing cells (in vitro). (Microbial infection) Binds HIV-2 protein vpx and thereby promotes the nuclear translocation of the lentiviral genome (in vitro). This Homo sapiens (Human) protein is Nuclear pore complex protein Nup153 (NUP153).